The following is a 449-amino-acid chain: Alginate biosynthesis transcriptional regulatory protein AlgB (449 aa).

The Response regulatory domain maps to 10 to 124; it reads RILLVDDESA…QLRLAAAKQL (115 aa). Aspartate 59 carries the post-translational modification 4-aspartylphosphate. The Sigma-54 factor interaction domain occupies 147 to 376; the sequence is LESHSPAMAA…LRNVIERASI (230 aa). Residues 175-182 and 238-247 each bind ATP; these read GESGSGKG and ADGGTLFLDE. The H-T-H motif DNA-binding region spans 426–445; sequence LDQAAKTLGIDASTLYRKRK.

In terms of processing, phosphorylated by KinB.

The protein operates within glycan biosynthesis; alginate biosynthesis [regulation]. Its function is as follows. Member of the two-component regulatory system AlgB/KinB involved in regulation of alginate biosynthesis genes. Positive regulator of the alginate biosynthetic gene AlgD. This Pseudomonas aeruginosa (strain ATCC 15692 / DSM 22644 / CIP 104116 / JCM 14847 / LMG 12228 / 1C / PRS 101 / PAO1) protein is Alginate biosynthesis transcriptional regulatory protein AlgB (algB).